The following is a 342-amino-acid chain: MRAFLDLNSEEIVAWLKENNEKSFRLKQINEWIFKHGELDFNKMTNLPVRLREKLKENFLLPSLKIIHSKKSRDGQSIKYLLKLKDNLGIEAVLLKYRYGNTVCLSTQVGCKMGCKFCATGLGGFSRNLTAGEMIEQILVLKASSSEKITRVVLMGSGEPLDNFTEVLKFMRKINEKDCLNISYRKITVSTCGMVPQIKALAEEKLPVTLAISLHAPDDALRNELIPINKRWGLAELLDAAWYFIDKTGRRVSFEYALIENVNDTVEHALKLAQLLQRKLVHVNLIPYNTIEKRNFKTPSVEKINKFKEVLKRAGIPVTVRRELGDEIDGACGQLKAKYFEV.

Catalysis depends on Glu-91, which acts as the Proton acceptor. A Radical SAM core domain is found at 97-327 (YRYGNTVCLS…VTVRRELGDE (231 aa)). Cys-104 and Cys-332 are joined by a disulfide. Positions 111, 115, and 118 each coordinate [4Fe-4S] cluster. S-adenosyl-L-methionine is bound by residues 158–159 (GE), Ser-190, 213–215 (SLH), and Asn-289. Cys-332 functions as the S-methylcysteine intermediate in the catalytic mechanism.

This sequence belongs to the radical SAM superfamily. RlmN family. It depends on [4Fe-4S] cluster as a cofactor.

Its subcellular location is the cytoplasm. It catalyses the reaction adenosine(2503) in 23S rRNA + 2 reduced [2Fe-2S]-[ferredoxin] + 2 S-adenosyl-L-methionine = 2-methyladenosine(2503) in 23S rRNA + 5'-deoxyadenosine + L-methionine + 2 oxidized [2Fe-2S]-[ferredoxin] + S-adenosyl-L-homocysteine. It carries out the reaction adenosine(37) in tRNA + 2 reduced [2Fe-2S]-[ferredoxin] + 2 S-adenosyl-L-methionine = 2-methyladenosine(37) in tRNA + 5'-deoxyadenosine + L-methionine + 2 oxidized [2Fe-2S]-[ferredoxin] + S-adenosyl-L-homocysteine. Its function is as follows. Specifically methylates position 2 of adenine 2503 in 23S rRNA and position 2 of adenine 37 in tRNAs. This Carboxydothermus hydrogenoformans (strain ATCC BAA-161 / DSM 6008 / Z-2901) protein is Probable dual-specificity RNA methyltransferase RlmN.